A 317-amino-acid chain; its full sequence is NAC domain-containing protein 55 (317 aa).

Positions 14–162 (LPPGFRFYPT…DWVLCRIYKK (149 aa)) constitute an NAC domain. The DNA-binding element occupies 111–168 (VGIKKALVFYIGKAPKGTKTNWIMHEYRLIEPSRRNGSTKLDDWVLCRIYKKQTSAQK).

As to expression, expressed in leaves.

It localises to the nucleus. Transcription factors that bind specifically to the 5'-CATGTG-3' motif. The polypeptide is NAC domain-containing protein 55 (NAC055) (Arabidopsis thaliana (Mouse-ear cress)).